The following is a 714-amino-acid chain: Fatty acid oxidation complex subunit alpha (714 aa).

The interval 1–190 (MEMTSAFTLN…KLGLVDDVVP (190 aa)) is enoyl-CoA hydratase. The interval 306–714 (APLNSVGILG…FWKTTATDLQ (409 aa)) is 3-hydroxyacyl-CoA dehydrogenase.

It in the N-terminal section; belongs to the enoyl-CoA hydratase/isomerase family. This sequence in the central section; belongs to the 3-hydroxyacyl-CoA dehydrogenase family. Heterotetramer of two alpha chains (FadJ) and two beta chains (FadI).

It is found in the cytoplasm. The catalysed reaction is a (3S)-3-hydroxyacyl-CoA = a (2E)-enoyl-CoA + H2O. The enzyme catalyses a 4-saturated-(3S)-3-hydroxyacyl-CoA = a (3E)-enoyl-CoA + H2O. It catalyses the reaction a (3S)-3-hydroxyacyl-CoA + NAD(+) = a 3-oxoacyl-CoA + NADH + H(+). It carries out the reaction (3S)-3-hydroxybutanoyl-CoA = (3R)-3-hydroxybutanoyl-CoA. It participates in lipid metabolism; fatty acid beta-oxidation. Functionally, catalyzes the formation of a hydroxyacyl-CoA by addition of water on enoyl-CoA. Also exhibits 3-hydroxyacyl-CoA epimerase and 3-hydroxyacyl-CoA dehydrogenase activities. Strongly involved in the anaerobic degradation of long and medium-chain fatty acids in the presence of nitrate and weakly involved in the aerobic degradation of long-chain fatty acids. The polypeptide is Fatty acid oxidation complex subunit alpha (fadJ) (Escherichia coli (strain K12)).